We begin with the raw amino-acid sequence, 96 residues long: Probable quinol oxidase subunit 4 (96 aa).

The next 3 helical transmembrane spans lie at 8–28 (TVGF…TLYT), 36–56 (VTII…MFMH), and 68–88 (FKVI…YWVM).

Belongs to the cytochrome c oxidase bacterial subunit 4 family.

The protein localises to the cell membrane. It catalyses the reaction 2 a quinol + O2 = 2 a quinone + 2 H2O. Its function is as follows. Catalyzes quinol oxidation with the concomitant reduction of oxygen to water. This Staphylococcus epidermidis (strain ATCC 35984 / DSM 28319 / BCRC 17069 / CCUG 31568 / BM 3577 / RP62A) protein is Probable quinol oxidase subunit 4 (qoxD).